Reading from the N-terminus, the 419-residue chain is eIF5-mimic protein 1 (419 aa).

The tract at residues 1–22 is disordered; sequence MNKHQKPVLTGQRFKTRKRDEK. Residue K117 is modified to N6-acetyllysine. Positions 248-415 constitute a W2 domain; sequence VQQSLGTRKE…QNAEEESESE (168 aa). 2 positions are modified to phosphoserine: S412 and S414.

This sequence belongs to the BZW family. Interacts with EIF3E. Interacts with EIF2S2. Interacts with EIF3C.

It localises to the cytoplasm. Functionally, translation initiation regulator which represses non-AUG initiated translation and repeat-associated non-AUG (RAN) initiated translation by acting as a competitive inhibitor of eukaryotic translation initiation factor 5 (EIF5) function. Increases the accuracy of translation initiation by impeding EIF5-dependent translation from non-AUG codons by competing with it for interaction with EIF2S2 within the 43S pre-initiation complex (PIC) in an EIF3C-binding dependent manner. This chain is eIF5-mimic protein 1 (BZW2), found in Homo sapiens (Human).